The following is a 426-amino-acid chain: 5-hydroxybenzimidazole synthase BzaB (426 aa).

Substrate contacts are provided by residues Met-95, Tyr-124, His-163, 185 to 187, 226 to 229, and Glu-265; these read SRG and DAIR. His-269 provides a ligand contact to Zn(2+). Residue Phe-292 participates in substrate binding. Zn(2+) is bound at residue His-333. Positions 407, 410, and 414 each coordinate [4Fe-4S] cluster.

Belongs to the ThiC family. 5-hydroxybenzimidazole synthase subfamily. The cofactor is [4Fe-4S] cluster.

It carries out the reaction 5-amino-1-(5-phospho-beta-D-ribosyl)imidazole + AH2 + S-adenosyl-L-methionine = 5-hydroxybenzimidazole + 5'-deoxyadenosine + formate + L-methionine + A + NH4(+) + phosphate + 2 H(+). Together with BzaA, probably catalyzes the conversion of aminoimidazole ribotide (AIR) to 5-hydroxybenzimidazole (5-HBI) in a radical S-adenosyl-L-methionine (SAM)-dependent reaction. Is thus involved in the anaerobic biosynthesis of the benzimidazole lower axial ligand of the cobamide produced by M.thermoacetica. Requires BzaA for catalytic activity, as BzaB alone displays no activity. The protein is 5-hydroxybenzimidazole synthase BzaB of Moorella thermoacetica (strain ATCC 39073 / JCM 9320).